Consider the following 418-residue polypeptide: Serine hydroxymethyltransferase (418 aa).

(6S)-5,6,7,8-tetrahydrofolate is bound by residues L120 and 124–126 (GHL). At K229 the chain carries N6-(pyridoxal phosphate)lysine.

Belongs to the SHMT family. As to quaternary structure, homodimer. Pyridoxal 5'-phosphate is required as a cofactor.

The protein resides in the cytoplasm. The enzyme catalyses (6R)-5,10-methylene-5,6,7,8-tetrahydrofolate + glycine + H2O = (6S)-5,6,7,8-tetrahydrofolate + L-serine. The protein operates within one-carbon metabolism; tetrahydrofolate interconversion. It functions in the pathway amino-acid biosynthesis; glycine biosynthesis; glycine from L-serine: step 1/1. In terms of biological role, catalyzes the reversible interconversion of serine and glycine with tetrahydrofolate (THF) serving as the one-carbon carrier. This reaction serves as the major source of one-carbon groups required for the biosynthesis of purines, thymidylate, methionine, and other important biomolecules. Also exhibits THF-independent aldolase activity toward beta-hydroxyamino acids, producing glycine and aldehydes, via a retro-aldol mechanism. This is Serine hydroxymethyltransferase from Myxococcus xanthus (strain DK1622).